Reading from the N-terminus, the 149-residue chain is uncharacterized protein (149 aa).

One can recognise an N-acetyltransferase domain in the interval 1–149 (MNIRQAKTSD…VHYCLNVPAK (149 aa)).

The protein belongs to the acetyltransferase family.

This is an uncharacterized protein from Bacillus subtilis (strain 168).